Here is a 1400-residue protein sequence, read N- to C-terminus: DNA-directed RNA polymerase subunit beta' (1400 aa).

Residues Cys71, Cys73, Cys86, and Cys89 each coordinate Zn(2+). Residues Asp462, Asp464, and Asp466 each contribute to the Mg(2+) site. Positions 810, 884, 891, and 894 each coordinate Zn(2+). The disordered stretch occupies residues 1377–1400; sequence REKQATIVPPAAPEAEPLALPPVE.

Belongs to the RNA polymerase beta' chain family. The RNAP catalytic core consists of 2 alpha, 1 beta, 1 beta' and 1 omega subunit. When a sigma factor is associated with the core the holoenzyme is formed, which can initiate transcription. It depends on Mg(2+) as a cofactor. Zn(2+) serves as cofactor.

It catalyses the reaction RNA(n) + a ribonucleoside 5'-triphosphate = RNA(n+1) + diphosphate. Functionally, DNA-dependent RNA polymerase catalyzes the transcription of DNA into RNA using the four ribonucleoside triphosphates as substrates. In Rhodopseudomonas palustris (strain HaA2), this protein is DNA-directed RNA polymerase subunit beta'.